Consider the following 328-residue polypeptide: Methionyl-tRNA formyltransferase (328 aa).

Ser-110–Pro-113 contacts (6S)-5,6,7,8-tetrahydrofolate.

Belongs to the Fmt family.

It catalyses the reaction L-methionyl-tRNA(fMet) + (6R)-10-formyltetrahydrofolate = N-formyl-L-methionyl-tRNA(fMet) + (6S)-5,6,7,8-tetrahydrofolate + H(+). Attaches a formyl group to the free amino group of methionyl-tRNA(fMet). The formyl group appears to play a dual role in the initiator identity of N-formylmethionyl-tRNA by promoting its recognition by IF2 and preventing the misappropriation of this tRNA by the elongation apparatus. The sequence is that of Methionyl-tRNA formyltransferase from Prochlorococcus marinus (strain AS9601).